A 522-amino-acid chain; its full sequence is Ribonuclease Y (522 aa).

Residues 3-23 (ELIMYILATAVVSIGVGIVAG) traverse the membrane as a helical segment. Residues 212–272 (CVSIFNIESD…VRREVARLSL (61 aa)) enclose the KH domain. Residues 338 to 431 (LLQHSREVAK…VQVCDAISGA (94 aa)) form the HD domain.

Belongs to the RNase Y family.

It is found in the cell membrane. Endoribonuclease that initiates mRNA decay. The polypeptide is Ribonuclease Y (Cytophaga hutchinsonii (strain ATCC 33406 / DSM 1761 / CIP 103989 / NBRC 15051 / NCIMB 9469 / D465)).